The chain runs to 717 residues: Patatin-like phospholipase domain-containing protein PGUG_03164 (717 aa).

The chain crosses the membrane as a helical span at residues 123–143 (WPFLIIITVWILLLCILYTVV). Positions 298–490 (LCLSGGACFA…RTDIPIDALK (193 aa)) constitute a PNPLA domain. The short motif at 329-333 (GTSGG) is the GXSXG element. S331 acts as the Nucleophile in catalysis. Catalysis depends on D477, which acts as the Proton acceptor. Positions 680–717 (YDSESSAEETLSPGFSQGTHAVLTDESDDDSSDDEIDD) are disordered. The segment covering 704 to 717 (DESDDDSSDDEIDD) has biased composition (acidic residues).

It belongs to the PLPL family.

The protein localises to the membrane. In terms of biological role, probable lipid hydrolase. This chain is Patatin-like phospholipase domain-containing protein PGUG_03164, found in Meyerozyma guilliermondii (strain ATCC 6260 / CBS 566 / DSM 6381 / JCM 1539 / NBRC 10279 / NRRL Y-324) (Yeast).